Reading from the N-terminus, the 173-residue chain is Lectin BRA-2 (173 aa).

An N-linked (GlcNAc...) asparagine glycan is attached at Asn39. Disulfide bonds link Cys47–Cys61, Cys78–Cys168, and Cys144–Cys160. The C-type lectin domain maps to 51-170 (PNGWVTSENK…NDRYNFVCEI (120 aa)).

As to quaternary structure, homohexamer; disulfide-linked. Coelemic fluid.

Sugar-binding protein which recognizes specific carbohydrate structures and agglutinates a variety of animal cells by binding to cell-surface glycoproteins and glycolipids. Calcium-dependent lectin. Invertebrate lectins may be involved in defense functions. The protein is Lectin BRA-2 of Megabalanus rosa (Acorn barnacle).